The primary structure comprises 114 residues: Nucleoid-associated protein MAE_23910 (114 aa).

Belongs to the YbaB/EbfC family. Homodimer.

Its subcellular location is the cytoplasm. It localises to the nucleoid. Binds to DNA and alters its conformation. May be involved in regulation of gene expression, nucleoid organization and DNA protection. In Microcystis aeruginosa (strain NIES-843 / IAM M-2473), this protein is Nucleoid-associated protein MAE_23910.